The primary structure comprises 251 residues: Glucosamine-6-phosphate deaminase (251 aa).

Catalysis depends on Asp-67, which acts as the Proton acceptor; for enolization step. Catalysis depends on Asn-136, which acts as the For ring-opening step. The active-site Proton acceptor; for ring-opening step is His-138. The active-site For ring-opening step is the Glu-143.

It belongs to the glucosamine/galactosamine-6-phosphate isomerase family. NagB subfamily.

It catalyses the reaction alpha-D-glucosamine 6-phosphate + H2O = beta-D-fructose 6-phosphate + NH4(+). It functions in the pathway amino-sugar metabolism; N-acetylneuraminate degradation; D-fructose 6-phosphate from N-acetylneuraminate: step 5/5. Catalyzes the reversible isomerization-deamination of glucosamine 6-phosphate (GlcN6P) to form fructose 6-phosphate (Fru6P) and ammonium ion. The protein is Glucosamine-6-phosphate deaminase of Geobacillus sp. (strain WCH70).